Reading from the N-terminus, the 360-residue chain is Type 2 DNA topoisomerase 6 subunit A (360 aa).

A Topo IIA-type catalytic domain is found at Glu-3–Ala-140. Residue Tyr-97 is the O-(5'-phospho-DNA)-tyrosine intermediate of the active site. Mg(2+)-binding residues include Glu-193 and Asp-245.

Belongs to the TOP6A family. As to quaternary structure, homodimer. Heterotetramer of two Top6A and two Top6B chains. Requires Mg(2+) as cofactor.

It catalyses the reaction ATP-dependent breakage, passage and rejoining of double-stranded DNA.. Functionally, relaxes both positive and negative superturns and exhibits a strong decatenase activity. The sequence is that of Type 2 DNA topoisomerase 6 subunit A from Archaeoglobus fulgidus (strain ATCC 49558 / DSM 4304 / JCM 9628 / NBRC 100126 / VC-16).